Reading from the N-terminus, the 213-residue chain is 5-oxoprolinase subunit B (213 aa).

Belongs to the PxpB family. Forms a complex composed of PxpA, PxpB and PxpC.

It carries out the reaction 5-oxo-L-proline + ATP + 2 H2O = L-glutamate + ADP + phosphate + H(+). Catalyzes the cleavage of 5-oxoproline to form L-glutamate coupled to the hydrolysis of ATP to ADP and inorganic phosphate. This is 5-oxoprolinase subunit B from Haemophilus influenzae (strain ATCC 51907 / DSM 11121 / KW20 / Rd).